A 350-amino-acid chain; its full sequence is Small ribosomal subunit biogenesis GTPase RsgA (350 aa).

The segment at 1–30 (MSKRKLTQNQQRRIQSNNAKTLHRHQHRHK) is disordered. Polar residues predominate over residues 7–20 (TQNQQRRIQSNNAK). Over residues 21–30 (TLHRHQHRHK) the composition is skewed to basic residues. In terms of domain architecture, CP-type G spans 106-274 (HNQIVRPDYY…LIDSPGIREF (169 aa)). GTP is bound by residues 162-165 (NKAD) and 216-224 (GQSGVGKSS). Residues C298, C303, H305, and C311 each contribute to the Zn(2+) site.

It belongs to the TRAFAC class YlqF/YawG GTPase family. RsgA subfamily. In terms of assembly, monomer. Associates with 30S ribosomal subunit, binds 16S rRNA. Zn(2+) is required as a cofactor.

It localises to the cytoplasm. One of several proteins that assist in the late maturation steps of the functional core of the 30S ribosomal subunit. Helps release RbfA from mature subunits. May play a role in the assembly of ribosomal proteins into the subunit. Circularly permuted GTPase that catalyzes slow GTP hydrolysis, GTPase activity is stimulated by the 30S ribosomal subunit. This is Small ribosomal subunit biogenesis GTPase RsgA from Histophilus somni (strain 129Pt) (Haemophilus somnus).